We begin with the raw amino-acid sequence, 167 residues long: Lipoprotein signal peptidase (167 aa).

Helical transmembrane passes span 12 to 32 (WLWL…AVVK), 68 to 88 (WQRW…IHWL), and 99 to 119 (GIAY…RLVL). Active-site residues include aspartate 124 and aspartate 142. A helical transmembrane segment spans residues 137–157 (AFNLADSFIFIGAAMIVLDGF).

The protein belongs to the peptidase A8 family.

It is found in the cell inner membrane. The catalysed reaction is Release of signal peptides from bacterial membrane prolipoproteins. Hydrolyzes -Xaa-Yaa-Zaa-|-(S,diacylglyceryl)Cys-, in which Xaa is hydrophobic (preferably Leu), and Yaa (Ala or Ser) and Zaa (Gly or Ala) have small, neutral side chains.. It participates in protein modification; lipoprotein biosynthesis (signal peptide cleavage). Functionally, this protein specifically catalyzes the removal of signal peptides from prolipoproteins. The sequence is that of Lipoprotein signal peptidase from Aeromonas hydrophila subsp. hydrophila (strain ATCC 7966 / DSM 30187 / BCRC 13018 / CCUG 14551 / JCM 1027 / KCTC 2358 / NCIMB 9240 / NCTC 8049).